The chain runs to 360 residues: Mitogen-activated protein kinase 14 (360 aa).

An N-acetylserine modification is found at serine 2. At serine 2 the chain carries Phosphoserine. A Phosphothreonine modification is found at threonine 16. The region spanning 24-308 (YQNLSPVGSG…AAQALAHAYF (285 aa)) is the Protein kinase domain. ATP-binding positions include 30–38 (VGSGAYGSV) and lysine 53. Lysine 53 and lysine 152 each carry N6-acetyllysine. The active-site Proton acceptor is the aspartate 168. Threonine 180 bears the Phosphothreonine; by MAP2K3, MAP2K4, MAP2K6 and autocatalysis mark. The TXY motif lies at 180–182 (TGY). At tyrosine 182 the chain carries Phosphotyrosine; by MAP2K3, MAP2K4, MAP2K6 and autocatalysis. Phosphothreonine is present on threonine 263. Tyrosine 323 is subject to Phosphotyrosine; by ZAP70.

It belongs to the protein kinase superfamily. CMGC Ser/Thr protein kinase family. MAP kinase subfamily. Component of a signaling complex containing at least AKAP13, PKN1, MAPK14, ZAK and MAP2K3. Within this complex, AKAP13 interacts directly with PKN1, which in turn recruits MAPK14, MAP2K3 and ZAK. Binds to a kinase interaction motif within the protein tyrosine phosphatase, PTPRR. This interaction retains MAPK14 in the cytoplasm and prevents nuclear accumulation. Interacts with SPAG9 and GADD45A. Interacts with CDC25B, CDC25C, DUSP1, DUSP10, DUSP16, NP60, SUPT20H and TAB1. Interacts with casein kinase II subunits CSNK2A1 and CSNK2B. Interacts with PPM1D. Interacts with CDK5RAP3; recruits PPM1D to MAPK14 and may regulate its dephosphorylation. Interacts with DUSP2; this interaction does not lead to catalytic activation of DUSP2 and dephosphrylation of MAPK14. It depends on Mg(2+) as a cofactor. Dually phosphorylated on Thr-180 and Tyr-182 by the MAP2Ks MAP2K3/MKK3, MAP2K4/MKK4 and MAP2K6/MKK6 in response to inflammatory citokines, environmental stress or growth factors, which activates the enzyme. Dual phosphorylation can also be mediated by TAB1-mediated autophosphorylation. TCR engagement in T-cells also leads to Tyr-323 phosphorylation by ZAP70. Dephosphorylated and inactivated by DUPS1, DUSP10 and DUSP16. PPM1D also mediates dephosphorylation and inactivation of MAPK14. In terms of processing, acetylated at Lys-53 and Lys-152 by KAT2B and EP300. Acetylation at Lys-53 increases the affinity for ATP and enhances kinase activity. Lys-53 and Lys-152 are deacetylated by HDAC3. Post-translationally, ubiquitinated. Ubiquitination leads to degradation by the proteasome pathway. Brain, heart, placenta, pancreas and skeletal muscle. Expressed to a lesser extent in lung, liver and kidney.

The protein resides in the cytoplasm. It is found in the nucleus. The enzyme catalyses L-seryl-[protein] + ATP = O-phospho-L-seryl-[protein] + ADP + H(+). It carries out the reaction L-threonyl-[protein] + ATP = O-phospho-L-threonyl-[protein] + ADP + H(+). Its activity is regulated as follows. Activated by cell stresses such as DNA damage, heat shock, osmotic shock, anisomycin and sodium arsenite, as well as pro-inflammatory stimuli such as bacterial lipopolysaccharide (LPS) and interleukin-1. Activation occurs through dual phosphorylation of Thr-180 and Tyr-182 by either of two dual specificity kinases, MAP2K3/MKK3 or MAP2K6/MKK6, and potentially also MAP2K4/MKK4, as well as by TAB1-mediated autophosphorylation. MAPK14 phosphorylated on both Thr-180 and Tyr-182 is 10-20-fold more active than MAPK14 phosphorylated only on Thr-180, whereas MAPK14 phosphorylated on Tyr-182 alone is inactive. whereas Thr-180 is necessary for catalysis, Tyr-182 may be required for auto-activation and substrate recognition. Phosphorylated at Tyr-323 by ZAP70 in an alternative activation pathway in response to TCR signaling in T-cells. This alternative pathway is inhibited by GADD45A. Inhibited by dual specificity phosphatases, such as DUSP1, DUSP10, and DUSP16. Specifically inhibited by the binding of pyridinyl-imidazole compounds, which are cytokine-suppressive anti-inflammatory drugs (CSAID). Isoform Mxi2 is 100-fold less sensitive to these agents than the other isoforms and is not inhibited by DUSP1. Isoform Exip is not activated by MAP2K6. SB203580 is an inhibitor of MAPK14. Functionally, serine/threonine kinase which acts as an essential component of the MAP kinase signal transduction pathway. MAPK14 is one of the four p38 MAPKs which play an important role in the cascades of cellular responses evoked by extracellular stimuli such as pro-inflammatory cytokines or physical stress leading to direct activation of transcription factors. Accordingly, p38 MAPKs phosphorylate a broad range of proteins and it has been estimated that they may have approximately 200 to 300 substrates each. Some of the targets are downstream kinases which are activated through phosphorylation and further phosphorylate additional targets. RPS6KA5/MSK1 and RPS6KA4/MSK2 can directly phosphorylate and activate transcription factors such as CREB1, ATF1, the NF-kappa-B isoform RELA/NFKB3, STAT1 and STAT3, but can also phosphorylate histone H3 and the nucleosomal protein HMGN1. RPS6KA5/MSK1 and RPS6KA4/MSK2 play important roles in the rapid induction of immediate-early genes in response to stress or mitogenic stimuli, either by inducing chromatin remodeling or by recruiting the transcription machinery. On the other hand, two other kinase targets, MAPKAPK2/MK2 and MAPKAPK3/MK3, participate in the control of gene expression mostly at the post-transcriptional level, by phosphorylating ZFP36 (tristetraprolin) and ELAVL1, and by regulating EEF2K, which is important for the elongation of mRNA during translation. MKNK1/MNK1 and MKNK2/MNK2, two other kinases activated by p38 MAPKs, regulate protein synthesis by phosphorylating the initiation factor EIF4E2. MAPK14 also interacts with casein kinase II, leading to its activation through autophosphorylation and further phosphorylation of TP53/p53. In the cytoplasm, the p38 MAPK pathway is an important regulator of protein turnover. For example, CFLAR is an inhibitor of TNF-induced apoptosis whose proteasome-mediated degradation is regulated by p38 MAPK phosphorylation. In a similar way, MAPK14 phosphorylates the ubiquitin ligase SIAH2, regulating its activity towards EGLN3. MAPK14 may also inhibit the lysosomal degradation pathway of autophagy by interfering with the intracellular trafficking of the transmembrane protein ATG9. Another function of MAPK14 is to regulate the endocytosis of membrane receptors by different mechanisms that impinge on the small GTPase RAB5A. In addition, clathrin-mediated EGFR internalization induced by inflammatory cytokines and UV irradiation depends on MAPK14-mediated phosphorylation of EGFR itself as well as of RAB5A effectors. Ectodomain shedding of transmembrane proteins is regulated by p38 MAPKs as well. In response to inflammatory stimuli, p38 MAPKs phosphorylate the membrane-associated metalloprotease ADAM17. Such phosphorylation is required for ADAM17-mediated ectodomain shedding of TGF-alpha family ligands, which results in the activation of EGFR signaling and cell proliferation. Another p38 MAPK substrate is FGFR1. FGFR1 can be translocated from the extracellular space into the cytosol and nucleus of target cells, and regulates processes such as rRNA synthesis and cell growth. FGFR1 translocation requires p38 MAPK activation. In the nucleus, many transcription factors are phosphorylated and activated by p38 MAPKs in response to different stimuli. Classical examples include ATF1, ATF2, ATF6, ELK1, PTPRH, DDIT3, TP53/p53 and MEF2C and MEF2A. The p38 MAPKs are emerging as important modulators of gene expression by regulating chromatin modifiers and remodelers. The promoters of several genes involved in the inflammatory response, such as IL6, IL8 and IL12B, display a p38 MAPK-dependent enrichment of histone H3 phosphorylation on 'Ser-10' (H3S10ph) in LPS-stimulated myeloid cells. This phosphorylation enhances the accessibility of the cryptic NF-kappa-B-binding sites marking promoters for increased NF-kappa-B recruitment. Phosphorylates CDC25B and CDC25C which is required for binding to 14-3-3 proteins and leads to initiation of a G2 delay after ultraviolet radiation. Phosphorylates TIAR following DNA damage, releasing TIAR from GADD45A mRNA and preventing mRNA degradation. The p38 MAPKs may also have kinase-independent roles, which are thought to be due to the binding to targets in the absence of phosphorylation. Protein O-Glc-N-acylation catalyzed by the OGT is regulated by MAPK14, and, although OGT does not seem to be phosphorylated by MAPK14, their interaction increases upon MAPK14 activation induced by glucose deprivation. This interaction may regulate OGT activity by recruiting it to specific targets such as neurofilament H, stimulating its O-Glc-N-acylation. Required in mid-fetal development for the growth of embryo-derived blood vessels in the labyrinth layer of the placenta. Also plays an essential role in developmental and stress-induced erythropoiesis, through regulation of EPO gene expression. Isoform MXI2 activation is stimulated by mitogens and oxidative stress and only poorly phosphorylates ELK1 and ATF2. Isoform EXIP may play a role in the early onset of apoptosis. Phosphorylates S100A9 at 'Thr-113'. Phosphorylates NLRP1 downstream of MAP3K20/ZAK in response to UV-B irradiation and ribosome collisions, promoting activation of the NLRP1 inflammasome and pyroptosis. Its function is as follows. (Microbial infection) Activated by phosphorylation by M.tuberculosis EsxA in T-cells leading to inhibition of IFN-gamma production; phosphorylation is apparent within 15 minutes and is inhibited by kinase-specific inhibitors SB203580 and siRNA. The protein is Mitogen-activated protein kinase 14 of Homo sapiens (Human).